Here is an 894-residue protein sequence, read N- to C-terminus: Phosphoenolpyruvate carboxylase (894 aa).

Active-site residues include histidine 143 and lysine 556.

This sequence belongs to the PEPCase type 1 family. The cofactor is Mg(2+).

It carries out the reaction oxaloacetate + phosphate = phosphoenolpyruvate + hydrogencarbonate. In terms of biological role, forms oxaloacetate, a four-carbon dicarboxylic acid source for the tricarboxylic acid cycle. The chain is Phosphoenolpyruvate carboxylase from Acinetobacter baylyi (strain ATCC 33305 / BD413 / ADP1).